Reading from the N-terminus, the 274-residue chain is Diaminopimelate epimerase (274 aa).

N11, Q44, and N64 together coordinate substrate. Catalysis depends on C73, which acts as the Proton donor. Substrate-binding positions include 74-75 (GN), N157, N190, and 208-209 (ER). C217 functions as the Proton acceptor in the catalytic mechanism. 218–219 (GS) is a substrate binding site.

This sequence belongs to the diaminopimelate epimerase family. Homodimer.

It is found in the cytoplasm. It catalyses the reaction (2S,6S)-2,6-diaminopimelate = meso-2,6-diaminopimelate. The protein operates within amino-acid biosynthesis; L-lysine biosynthesis via DAP pathway; DL-2,6-diaminopimelate from LL-2,6-diaminopimelate: step 1/1. Functionally, catalyzes the stereoinversion of LL-2,6-diaminopimelate (L,L-DAP) to meso-diaminopimelate (meso-DAP), a precursor of L-lysine and an essential component of the bacterial peptidoglycan. The chain is Diaminopimelate epimerase from Shigella boydii serotype 18 (strain CDC 3083-94 / BS512).